The primary structure comprises 82 residues: Transcription elongation factor 1 homolog (82 aa).

Positions 26, 29, 50, and 53 each coordinate Zn(2+).

This sequence belongs to the ELOF1 family.

It localises to the nucleus. Functionally, transcription elongation factor implicated in the maintenance of proper chromatin structure in actively transcribed regions. This is Transcription elongation factor 1 homolog from Manduca sexta (Tobacco hawkmoth).